We begin with the raw amino-acid sequence, 247 residues long: MAGHSKWANIQHRKGRQDAKRGKMFTKAAKEIIIAAKAGGDPVGNSRLRAAIAAAKAINLPKDKIENAIKKGTGELAGGDILEMAYEGYGPGGVALIVEVATDNKNRTVAEVRHILSKHGGSMGESGCVAWMFDRKGVITLEKDKYTEEQLMEVALEAGAEDVTDEGESWEVVTAAADFNAVREALEAAGVEMQSAEFTMVPQNEIEVDVETGRKLMRLVDALEDNDDVQNVHANFDLPDELLAELG.

The interval 1-22 (MAGHSKWANIQHRKGRQDAKRG) is disordered.

This sequence belongs to the TACO1 family.

The protein resides in the cytoplasm. The protein is Probable transcriptional regulatory protein Dvul_0986 of Nitratidesulfovibrio vulgaris (strain DP4) (Desulfovibrio vulgaris).